The chain runs to 286 residues: 3-hydroxyanthranilate 3,4-dioxygenase (286 aa).

The tract at residues 1-160 is domain A (catalytic); it reads MERRVRVKSW…SEQYRTGKPN (160 aa). Residue R43 coordinates O2. Residues H47, E53, and H91 each contribute to the Fe cation site. Residue E53 coordinates substrate. 2 residues coordinate substrate: R95 and E105. Positions 161–177 are linker; it reads PDQLLKELPFPLNTRSI. Positions 178–286 are domain B; the sequence is MKPMSLKAWL…QDPARKKPWW (109 aa).

The protein belongs to the 3-HAO family. As to quaternary structure, monomer. It depends on Fe(2+) as a cofactor.

The protein localises to the cytoplasm. Its subcellular location is the cytosol. It catalyses the reaction 3-hydroxyanthranilate + O2 = (2Z,4Z)-2-amino-3-carboxymuconate 6-semialdehyde. It functions in the pathway cofactor biosynthesis; NAD(+) biosynthesis; quinolinate from L-kynurenine: step 3/3. In terms of biological role, catalyzes the oxidative ring opening of 3-hydroxyanthranilate to 2-amino-3-carboxymuconate semialdehyde, which spontaneously cyclizes to quinolinate. The polypeptide is 3-hydroxyanthranilate 3,4-dioxygenase (Haao) (Mus musculus (Mouse)).